Consider the following 146-residue polypeptide: Gonadotropin subunit beta-2 (146 aa).

The N-terminal stretch at 1–28 (TGTPVKILVVRNILLLLFCLVVLLVFAQ) is a signal peptide. 6 cysteine pairs are disulfide-bonded: cysteine 35–cysteine 83, cysteine 49–cysteine 98, cysteine 52–cysteine 136, cysteine 60–cysteine 114, cysteine 64–cysteine 116, and cysteine 119–cysteine 126. The N-linked (GlcNAc...) asparagine glycan is linked to asparagine 39.

The protein belongs to the glycoprotein hormones subunit beta family. Heterodimer of an alpha and a beta chain.

It localises to the secreted. In terms of biological role, involved in gametogenesis and steroidogenesis. This is Gonadotropin subunit beta-2 (cgbb) from Ctenopharyngodon idella (Grass carp).